A 289-amino-acid polypeptide reads, in one-letter code: Oxaloacetate decarboxylase 1 (289 aa).

Serine 50 lines the substrate pocket. Aspartate 88 serves as a coordination point for Mg(2+). Residues arginine 159 and histidine 235 each contribute to the substrate site.

Belongs to the isocitrate lyase/PEP mutase superfamily. Oxaloacetate decarboxylase family. In terms of assembly, homotetramer; dimer of dimers. Requires Mg(2+) as cofactor.

It carries out the reaction oxaloacetate + H(+) = pyruvate + CO2. Its function is as follows. Catalyzes the decarboxylation of oxaloacetate into pyruvate. Seems to play a role in maintaining cellular concentrations of bicarbonate and pyruvate. This chain is Oxaloacetate decarboxylase 1, found in Pseudomonas putida (strain W619).